We begin with the raw amino-acid sequence, 771 residues long: Kojibiose phosphorylase (771 aa).

Trp358 to Asp359 contributes to the substrate binding site. Glu498 functions as the Proton donor in the catalytic mechanism. Lys611–Gln612 contributes to the substrate binding site.

The protein belongs to the glycosyl hydrolase 65 family.

The catalysed reaction is kojibiose + phosphate = beta-D-glucose 1-phosphate + D-glucose. Functionally, catalyzes the reversible phosphorolysis of kojibiose into beta-D-glucose 1-phosphate (Glc1P) and D-glucose. This Caldanaerobacter subterraneus subsp. tengcongensis (strain DSM 15242 / JCM 11007 / NBRC 100824 / MB4) (Thermoanaerobacter tengcongensis) protein is Kojibiose phosphorylase (kojP).